We begin with the raw amino-acid sequence, 499 residues long: Guanosine-5'-triphosphate,3'-diphosphate pyrophosphatase (499 aa).

It belongs to the GppA/Ppx family. GppA subfamily.

It catalyses the reaction guanosine 3'-diphosphate 5'-triphosphate + H2O = guanosine 3',5'-bis(diphosphate) + phosphate + H(+). It functions in the pathway purine metabolism; ppGpp biosynthesis; ppGpp from GTP: step 2/2. Its function is as follows. Catalyzes the conversion of pppGpp to ppGpp. Guanosine pentaphosphate (pppGpp) is a cytoplasmic signaling molecule which together with ppGpp controls the 'stringent response', an adaptive process that allows bacteria to respond to amino acid starvation, resulting in the coordinated regulation of numerous cellular activities. The sequence is that of Guanosine-5'-triphosphate,3'-diphosphate pyrophosphatase from Klebsiella pneumoniae (strain 342).